A 591-amino-acid polypeptide reads, in one-letter code: Aspartate--tRNA(Asp/Asn) ligase (591 aa).

Glu-174 serves as a coordination point for L-aspartate. The tract at residues Gln-198–Lys-201 is aspartate. Arg-220 is an L-aspartate binding site. ATP is bound by residues Arg-220 to Glu-222 and Gln-229. Position 450 (His-450) interacts with L-aspartate. Glu-483 is an ATP binding site. Position 490 (Arg-490) interacts with L-aspartate. ATP is bound at residue Gly-535–Arg-538.

Belongs to the class-II aminoacyl-tRNA synthetase family. Type 1 subfamily. In terms of assembly, homodimer.

It localises to the cytoplasm. It catalyses the reaction tRNA(Asx) + L-aspartate + ATP = L-aspartyl-tRNA(Asx) + AMP + diphosphate. Functionally, aspartyl-tRNA synthetase with relaxed tRNA specificity since it is able to aspartylate not only its cognate tRNA(Asp) but also tRNA(Asn). Reaction proceeds in two steps: L-aspartate is first activated by ATP to form Asp-AMP and then transferred to the acceptor end of tRNA(Asp/Asn). The chain is Aspartate--tRNA(Asp/Asn) ligase from Ectopseudomonas mendocina (strain ymp) (Pseudomonas mendocina).